A 400-amino-acid chain; its full sequence is Cytoplasmic polyadenylated homeobox-like protein 2 (400 aa).

The segment at 1 to 29 (MSSQAFPAEEDHHNEERQTKKKRKTKHRH) is disordered. Over residues 9 to 18 (EEDHHNEERQ) the composition is skewed to basic and acidic residues. Basic residues predominate over residues 19–29 (TKKKRKTKHRH). Residues 24 to 83 (KTKHRHKFSEELLQELKEIFGENGYPDFTTRKTLANKFDCPVNVINNWFQNNRARLPPEE) constitute a DNA-binding region (homeobox).

Its subcellular location is the nucleus. This is Cytoplasmic polyadenylated homeobox-like protein 2 from Homo sapiens (Human).